The sequence spans 405 residues: Aspartic protease (405 aa).

An N-terminal signal peptide occupies residues 1–21 (MISDTVIAILAVALVGSTVQA). The propeptide at 22-81 (APVDATATSTSGIIAVPISKSAAQLAREADPVVSLDWLKKTKAQAQYKHKQANARLHSKR) is removed in mature form. The Peptidase A1 domain maps to 97 to 402 (WTGPITIGGQ…DVGNARVGFA (306 aa)). The active site involves D113. C126 and C131 are disulfide-bonded. The active site involves D290. A disulfide bridge links C332 with C366.

Belongs to the peptidase A1 family.

The protein resides in the secreted. Inhibited by pepstatin A. Its function is as follows. Possesses acidic protease activity. Hydrolyzes casein and azoalbumin in vitro. This is Aspartic protease from Phaffia rhodozyma (Yeast).